Here is an 817-residue protein sequence, read N- to C-terminus: General transcription factor 3C polypeptide 4 (817 aa).

Position 1 is an N-acetylmethionine (Met-1). Residues 1-40 are disordered; the sequence is MSEADQALVGPKADEPSPPAEEKDEGGGKEAAADAAPGPS. A Glycyl lysine isopeptide (Lys-Gly) (interchain with G-Cter in SUMO2) cross-link involves residue Lys-221. A phosphoserine mark is found at Ser-600 and Ser-607. The tract at residues 603–658 is disordered; the sequence is LLVDSPGMGDGEDEQQEEGTSKQGTKAGLQEKSKEGDTEETPEDSLTAGGDTGGRE. Lys-624 is covalently cross-linked (Glycyl lysine isopeptide (Lys-Gly) (interchain with G-Cter in SUMO2)). Position 647 is a phosphoserine (Ser-647).

It belongs to the TFIIIC subunit 4 family. Part of the TFIIIC subcomplex TFIIIC2, consisting of six subunits, GTF3C1, GTF3C2, GTF3C3, GTF3C4, GTF3C5 and GTF3C6. Interacts with BRF1, GTF3C1, GTF3C2, GTF3C5, GTF3C6, POLR3C and POLR3F.

It localises to the nucleus. The enzyme catalyses L-lysyl-[protein] + acetyl-CoA = N(6)-acetyl-L-lysyl-[protein] + CoA + H(+). Functionally, essential for RNA polymerase III to make a number of small nuclear and cytoplasmic RNAs, including 5S RNA, tRNA, and adenovirus-associated (VA) RNA of both cellular and viral origin. Has histone acetyltransferase activity (HAT) with unique specificity for free and nucleosomal H3. May cooperate with GTF3C5 in facilitating the recruitment of TFIIIB and RNA polymerase through direct interactions with BRF1, POLR3C and POLR3F. May be localized close to the A box. The chain is General transcription factor 3C polypeptide 4 (Gtf3c4) from Mus musculus (Mouse).